A 352-amino-acid polypeptide reads, in one-letter code: Biotin synthase (352 aa).

Residues 44-262 (NRVQVSTLLS…LAVARILMPK (219 aa)) enclose the Radical SAM core domain. Positions 59, 63, and 66 each coordinate [4Fe-4S] cluster. Positions 103, 134, 194, and 266 each coordinate [2Fe-2S] cluster.

It belongs to the radical SAM superfamily. Biotin synthase family. In terms of assembly, homodimer. [4Fe-4S] cluster is required as a cofactor. It depends on [2Fe-2S] cluster as a cofactor.

It carries out the reaction (4R,5S)-dethiobiotin + (sulfur carrier)-SH + 2 reduced [2Fe-2S]-[ferredoxin] + 2 S-adenosyl-L-methionine = (sulfur carrier)-H + biotin + 2 5'-deoxyadenosine + 2 L-methionine + 2 oxidized [2Fe-2S]-[ferredoxin]. It functions in the pathway cofactor biosynthesis; biotin biosynthesis; biotin from 7,8-diaminononanoate: step 2/2. Its function is as follows. Catalyzes the conversion of dethiobiotin (DTB) to biotin by the insertion of a sulfur atom into dethiobiotin via a radical-based mechanism. The sequence is that of Biotin synthase from Pseudomonas syringae pv. syringae (strain B728a).